Reading from the N-terminus, the 541-residue chain is Zinc finger protein 513 (541 aa).

The disordered stretch occupies residues 1–120 (MPRRKQSHPQ…ARGERPGPAC (120 aa)). Over residues 44 to 55 (LEFEEEEEEEEG) the composition is skewed to acidic residues. 2 positions are modified to phosphoserine: S85 and S96. A compositionally biased stretch (basic and acidic residues) spans 103 to 115 (EPARGPGEARGER). C2H2-type zinc fingers lie at residues 150–172 (YSCR…MQTH), 178–200 (FRCG…TRTH), 206–228 (YRCP…QRTH), 360–382 (FACS…MKTH), 388–410 (FRCA…QRVH), 416–438 (YKCP…GRIH), 444–466 (FRCS…MLRH), and 472–494 (FRCA…QKVH). A disordered region spans residues 492-541 (KVHGHGGAGGPGLSAPEGWAPPHSPPSVLSTRGSAALGATGSRALHTDSP).

Belongs to the krueppel C2H2-type zinc-finger protein family. In terms of assembly, binds DNA. Can associate with the proximal promoter regions of PAX6 and SP4, and their known targets including ARR3, RHO, OPN1MW2 and OPN1SW.

Its subcellular location is the nucleus. Functionally, transcriptional regulator that plays a role in retinal development and maintenance. This chain is Zinc finger protein 513 (Znf513), found in Rattus norvegicus (Rat).